The sequence spans 848 residues: Beta-galactosidase 13 (848 aa).

The signal sequence occupies residues 1-27; sequence MKIHSSDHSWLLLAVLVILLSFSGALS. Asparagine 107 carries N-linked (GlcNAc...) asparagine glycosylation. Glutamate 200 (proton donor) is an active-site residue. The Nucleophile role is filled by glutamate 271. 7 N-linked (GlcNAc...) asparagine glycosylation sites follow: asparagine 272, asparagine 303, asparagine 376, asparagine 398, asparagine 782, asparagine 787, and asparagine 817. The region spanning 754 to 843 is the SUEL-type lectin domain; it reads DDVHLTANLK…KKLAVQVKCG (90 aa).

This sequence belongs to the glycosyl hydrolase 35 family. In terms of tissue distribution, ubiquitous, with higher expression levels in roots, flowers and siliques.

Its subcellular location is the secreted. The protein resides in the extracellular space. The protein localises to the apoplast. The catalysed reaction is Hydrolysis of terminal non-reducing beta-D-galactose residues in beta-D-galactosides.. The polypeptide is Beta-galactosidase 13 (BGAL13) (Arabidopsis thaliana (Mouse-ear cress)).